A 487-amino-acid chain; its full sequence is Fatty acid desaturase 2-like protein FADS2B (487 aa).

A compositionally biased stretch (basic and acidic residues) spans 1-11; the sequence is MKLEEKLEHNE. A disordered region spans residues 1–20; it reads MKLEEKLEHNESLVGKSRPC. The Cytoplasmic portion of the chain corresponds to 1–175; that stretch reads MKLEEKLEHN…AMNMFSANLR (175 aa). One can recognise a Cytochrome b5 heme-binding domain in the interval 62–139; the sequence is LNLYTWQEIQ…LKPLLIGELS (78 aa). Residues histidine 97 and histidine 120 each contribute to the heme site. A helical membrane pass occupies residues 176 to 196; that stretch reads FFFLHLAQILILEISAWLILH. Over 197–201 the chain is Lumenal; sequence HFGSS. Residues 202–222 traverse the membrane as a helical segment; sequence WLVTILISFLLTVSQAQCSFL. At 223-307 the chain is on the cytoplasmic side; it reads QHDLGHLSMF…IKYIDYEKQH (85 aa). The Histidine box-1 motif lies at 224–228; it reads HDLGH. A Histidine box-2 motif is present at residues 261 to 265; it reads HFQHH. A helical transmembrane segment spans residues 308-328; that stretch reads LYFYMVALPFLMPVYFNLQSM. Residues 329-349 are Lumenal-facing; it reads QVMYLRKYWMDIAWVSSFYIR. Residues 350–370 traverse the membrane as a helical segment; the sequence is YFITFGPFYGIFGTVLLIYLV. Residues 371–487 are Cytoplasmic-facing; the sequence is KFIESPWIAY…ASLWMNAYYE (117 aa). The short motif at 426-430 is the Histidine box-3 element; that stretch reads QIEHH.

The protein belongs to the fatty acid desaturase type 1 family.

The protein resides in the endoplasmic reticulum membrane. Its pathway is lipid metabolism; polyunsaturated fatty acid biosynthesis. This chain is Fatty acid desaturase 2-like protein FADS2B, found in Mus musculus (Mouse).